A 333-amino-acid chain; its full sequence is Biotin synthase (333 aa).

Positions Ala54 to Arg287 constitute a Radical SAM core domain. The [4Fe-4S] cluster site is built by Cys72, Cys76, and Cys79. Residues Cys151, Cys212, and Lys282 each contribute to the [2Fe-2S] cluster site.

It belongs to the radical SAM superfamily. Biotin synthase family. As to quaternary structure, homodimer. [4Fe-4S] cluster is required as a cofactor. The cofactor is [2Fe-2S] cluster.

It catalyses the reaction (4R,5S)-dethiobiotin + (sulfur carrier)-SH + 2 reduced [2Fe-2S]-[ferredoxin] + 2 S-adenosyl-L-methionine = (sulfur carrier)-H + biotin + 2 5'-deoxyadenosine + 2 L-methionine + 2 oxidized [2Fe-2S]-[ferredoxin]. The protein operates within cofactor biosynthesis; biotin biosynthesis; biotin from 7,8-diaminononanoate: step 2/2. Catalyzes the conversion of dethiobiotin (DTB) to biotin by the insertion of a sulfur atom into dethiobiotin via a radical-based mechanism. The polypeptide is Biotin synthase (Chlorobaculum tepidum (strain ATCC 49652 / DSM 12025 / NBRC 103806 / TLS) (Chlorobium tepidum)).